The chain runs to 122 residues: Large ribosomal subunit protein uL14 (122 aa).

The protein belongs to the universal ribosomal protein uL14 family. In terms of assembly, part of the 50S ribosomal subunit. Forms a cluster with proteins L3 and L19. In the 70S ribosome, L14 and L19 interact and together make contacts with the 16S rRNA in bridges B5 and B8.

Its function is as follows. Binds to 23S rRNA. Forms part of two intersubunit bridges in the 70S ribosome. The chain is Large ribosomal subunit protein uL14 from Acinetobacter baumannii (strain SDF).